We begin with the raw amino-acid sequence, 445 residues long: Phosphoglucosamine mutase (445 aa).

The Phosphoserine intermediate role is filled by serine 102. Residues serine 102, aspartate 241, aspartate 243, and aspartate 245 each contribute to the Mg(2+) site. The residue at position 102 (serine 102) is a Phosphoserine.

Belongs to the phosphohexose mutase family. Requires Mg(2+) as cofactor. Activated by phosphorylation.

It catalyses the reaction alpha-D-glucosamine 1-phosphate = D-glucosamine 6-phosphate. Its function is as follows. Catalyzes the conversion of glucosamine-6-phosphate to glucosamine-1-phosphate. This chain is Phosphoglucosamine mutase, found in Pectobacterium carotovorum subsp. carotovorum (strain PC1).